The following is a 190-amino-acid chain: Putative 3-methyladenine DNA glycosylase (190 aa).

Belongs to the DNA glycosylase MPG family.

This chain is Putative 3-methyladenine DNA glycosylase, found in Chlamydia abortus (strain DSM 27085 / S26/3) (Chlamydophila abortus).